Reading from the N-terminus, the 349-residue chain is Phosphoribosylformylglycinamidine cyclo-ligase (349 aa).

The protein belongs to the AIR synthase family.

The protein localises to the cytoplasm. The enzyme catalyses 2-formamido-N(1)-(5-O-phospho-beta-D-ribosyl)acetamidine + ATP = 5-amino-1-(5-phospho-beta-D-ribosyl)imidazole + ADP + phosphate + H(+). The protein operates within purine metabolism; IMP biosynthesis via de novo pathway; 5-amino-1-(5-phospho-D-ribosyl)imidazole from N(2)-formyl-N(1)-(5-phospho-D-ribosyl)glycinamide: step 2/2. The protein is Phosphoribosylformylglycinamidine cyclo-ligase of Lactobacillus delbrueckii subsp. bulgaricus (strain ATCC 11842 / DSM 20081 / BCRC 10696 / JCM 1002 / NBRC 13953 / NCIMB 11778 / NCTC 12712 / WDCM 00102 / Lb 14).